The primary structure comprises 232 residues: MAALRYKADFLKASIDGGVLKFGSFELKSKRISPYFFNAGDFYRADLLQAISTAYAKCIIEAHKSGQLDFDIVFGPAYKGIPLATAATDKLAQLDPETYGKICYSFDRKEAKDHGEGGNIVGAPLKGKRILIVDDVITAGTAKREAIAKIEKEGGIVAGIVVALDRMEKLPAADGDDSKPGPSAMVSSARSTAIPIFAILTLDDIIEGMRGLASPEDVKKTEEYRAKYKATD.

Lysine 28 contacts 5-phospho-alpha-D-ribose 1-diphosphate. 36–37 (FF) lines the orotate pocket. Residues 78–79 (YK), arginine 108, lysine 109, lysine 112, histidine 114, and 134–142 (DDVITAGTA) contribute to the 5-phospho-alpha-D-ribose 1-diphosphate site. Orotate is bound by residues threonine 138 and arginine 166.

The protein belongs to the purine/pyrimidine phosphoribosyltransferase family. PyrE subfamily. Homodimer.

It catalyses the reaction orotidine 5'-phosphate + diphosphate = orotate + 5-phospho-alpha-D-ribose 1-diphosphate. Its pathway is pyrimidine metabolism; UMP biosynthesis via de novo pathway; UMP from orotate: step 1/2. Its function is as follows. Catalyzes the transfer of a ribosyl phosphate group from 5-phosphoribose 1-diphosphate to orotate, leading to the formation of orotidine monophosphate (OMP). The sequence is that of Orotate phosphoribosyltransferase (URA5) from Sordaria macrospora.